Here is a 368-residue protein sequence, read N- to C-terminus: Probable leucine aminopeptidase ARB_03492 (368 aa).

Positions 1 to 18 are cleaved as a signal peptide; that stretch reads MKVSAIAAVAALAAVAVA. Asn-92 carries an N-linked (GlcNAc...) asparagine glycan. Positions 172 and 191 each coordinate Zn(2+). N-linked (GlcNAc...) asparagine glycosylation is found at Asn-192 and Asn-216. Zn(2+) contacts are provided by Glu-230 and Asp-257. Cysteines 301 and 305 form a disulfide. His-334 lines the Zn(2+) pocket.

It belongs to the peptidase M28 family. M28E subfamily. In terms of assembly, monomer. Zn(2+) serves as cofactor.

Its subcellular location is the secreted. Probable extracellular aminopeptidase which contributes to pathogenicity. This Arthroderma benhamiae (strain ATCC MYA-4681 / CBS 112371) (Trichophyton mentagrophytes) protein is Probable leucine aminopeptidase ARB_03492.